A 260-amino-acid polypeptide reads, in one-letter code: MAKLCAQQVSVVYASRRGALTALENVSMSVGSGEIVVALGASGCGKSTLLSLLAGFQPPTSGRVSVDGAPVAGPGADRGVVFQDDALMPWLNVIENVAFGLRMQGVGRDARHARARDVLRLVKLAGFEQHRIDEISGGMRQRVGLARALAADPSFLLMDEPLGALDALTREHMQTLLLDVWRATGKGVFLITHSVEEAVLLATELLILSPRPGRIVARHSLDFARRYAHGEPMRSIKSDPRFTEIHLALVEQLMRETEEV.

Residues 6-235 enclose the ABC transporter domain; sequence AQQVSVVYAS…RYAHGEPMRS (230 aa). 40–47 serves as a coordination point for ATP; it reads GASGCGKS.

Belongs to the ABC transporter superfamily. Taurine importer (TC 3.A.1.17.1) family. The complex is composed of two ATP-binding proteins (TauB), two transmembrane proteins (TauC) and a solute-binding protein (TauA).

It localises to the cell inner membrane. It carries out the reaction taurine(out) + ATP + H2O = taurine(in) + ADP + phosphate + H(+). Part of the ABC transporter complex TauABC involved in taurine import. Responsible for energy coupling to the transport system. The chain is Taurine import ATP-binding protein TauB from Burkholderia pseudomallei (strain 1710b).